Consider the following 256-residue polypeptide: Ribonuclease HII (256 aa).

The RNase H type-2 domain maps to 72–256 (QYVAGIDEVG…TFRPVPDYVN (185 aa)). Positions 78, 79, and 170 each coordinate a divalent metal cation.

Belongs to the RNase HII family. Requires Mn(2+) as cofactor. Mg(2+) is required as a cofactor.

Its subcellular location is the cytoplasm. The enzyme catalyses Endonucleolytic cleavage to 5'-phosphomonoester.. Its function is as follows. Endonuclease that specifically degrades the RNA of RNA-DNA hybrids. The protein is Ribonuclease HII of Limosilactobacillus fermentum (strain NBRC 3956 / LMG 18251) (Lactobacillus fermentum).